A 768-amino-acid polypeptide reads, in one-letter code: Valine--tRNA ligase (768 aa).

A 'HIGH' region motif is present at residues 37 to 47 (PTVSGKMHMGH). Residues 510–514 (KMSKS) carry the 'KMSKS' region motif. An ATP-binding site is contributed by Lys-513.

The protein belongs to the class-I aminoacyl-tRNA synthetase family. ValS type 2 subfamily.

It localises to the cytoplasm. The enzyme catalyses tRNA(Val) + L-valine + ATP = L-valyl-tRNA(Val) + AMP + diphosphate. Functionally, catalyzes the attachment of valine to tRNA(Val). As ValRS can inadvertently accommodate and process structurally similar amino acids such as threonine, to avoid such errors, it has a 'posttransfer' editing activity that hydrolyzes mischarged Thr-tRNA(Val) in a tRNA-dependent manner. The sequence is that of Valine--tRNA ligase from Picrophilus torridus (strain ATCC 700027 / DSM 9790 / JCM 10055 / NBRC 100828 / KAW 2/3).